We begin with the raw amino-acid sequence, 122 residues long: S-adenosylmethionine decarboxylase proenzyme (122 aa).

The active-site Schiff-base intermediate with substrate; via pyruvic acid is Ser-61. A Pyruvic acid (Ser); by autocatalysis modification is found at Ser-61. The active-site Proton acceptor; for processing activity is the His-66. Catalysis depends on Cys-81, which acts as the Proton donor; for catalytic activity.

The protein belongs to the prokaryotic AdoMetDC family. Type 1 subfamily. In terms of assembly, heterotetramer of two alpha and two beta chains arranged as a dimer of alpha/beta heterodimers. It depends on pyruvate as a cofactor. Post-translationally, is synthesized initially as an inactive proenzyme. Formation of the active enzyme involves a self-maturation process in which the active site pyruvoyl group is generated from an internal serine residue via an autocatalytic post-translational modification. Two non-identical subunits are generated from the proenzyme in this reaction, and the pyruvate is formed at the N-terminus of the alpha chain, which is derived from the carboxyl end of the proenzyme. The post-translation cleavage follows an unusual pathway, termed non-hydrolytic serinolysis, in which the side chain hydroxyl group of the serine supplies its oxygen atom to form the C-terminus of the beta chain, while the remainder of the serine residue undergoes an oxidative deamination to produce ammonia and the pyruvoyl group blocking the N-terminus of the alpha chain.

It catalyses the reaction S-adenosyl-L-methionine + H(+) = S-adenosyl 3-(methylsulfanyl)propylamine + CO2. The protein operates within amine and polyamine biosynthesis; S-adenosylmethioninamine biosynthesis; S-adenosylmethioninamine from S-adenosyl-L-methionine: step 1/1. Catalyzes the decarboxylation of S-adenosylmethionine to S-adenosylmethioninamine (dcAdoMet), the propylamine donor required for the synthesis of the polyamines spermine and spermidine from the diamine putrescine. This is S-adenosylmethionine decarboxylase proenzyme from Prochlorococcus marinus (strain MIT 9211).